Here is a 207-residue protein sequence, read N- to C-terminus: Heat shock protein beta-1 (207 aa).

Residue R12 is modified to Omega-N-methylarginine. The residue at position 13 (S13) is a Phosphoserine. The residue at position 15 (S15) is a Phosphoserine; by MAPKAPK2 and MAPKAPK3. Phosphoserine is present on S27. The interval 72 to 207 (APAYSRLLSR…AGKSEKPGTK (136 aa)) is interaction with TGFB1I1. Residues 78 to 186 (LLSRQLSSGV…QSAEITIPVT (109 aa)) form the sHSP domain. Phosphoserine; by MAPKAPK2, MAPKAPK3 and MAPKAPK5 is present on residues S80 and S84. S85, S88, and S100 each carry phosphoserine. K125 is subject to N6-acetyllysine. The disordered stretch occupies residues 151–181 (DPTQVSSSLSPEGTLSVEAPLPKPATQSAEI). Polar residues predominate over residues 153–163 (TQVSSSLSPEG). A Phosphothreonine modification is found at T176. Phosphoserine is present on residues S178 and S201.

This sequence belongs to the small heat shock protein (HSP20) family. Homooligomer. Homodimer; becomes monomeric upon activation. Heterooligomer; with HSPB6. Associates with alpha- and beta-tubulin. Interacts with TGFB1I1. Interacts with CRYAB. Interacts with HSPB8. Interacts with HSPBAP1. Post-translationally, phosphorylated upon exposure to protein kinase C activators and heat shock. Phosphorylation by MAPKAPK2 and MAPKAPK3 in response to stress dissociates HSPB1 from large small heat-shock protein (sHsps) oligomers and impairs its chaperone activity and ability to protect against oxidative stress effectively. Phosphorylation by MAPKAPK5 in response to PKA stimulation induces F-actin rearrangement.

The protein resides in the cytoplasm. Its subcellular location is the nucleus. It localises to the cytoskeleton. The protein localises to the spindle. Functionally, small heat shock protein which functions as a molecular chaperone probably maintaining denatured proteins in a folding-competent state. Plays a role in stress resistance and actin organization. Through its molecular chaperone activity may regulate numerous biological processes including the phosphorylation and the axonal transport of neurofilament proteins. This is Heat shock protein beta-1 (HSPB1) from Sus scrofa (Pig).